A 276-amino-acid chain; its full sequence is NAC domain-containing protein 67 (276 aa).

Positions 17 to 170 (LPPGFRFHPT…DWVLCRLYNK (154 aa)) constitute an NAC domain.

As to expression, expressed in leaf blades.

The protein localises to the nucleus. Functionally, probable transcription factor involved in stress response. In Oryza sativa subsp. japonica (Rice), this protein is NAC domain-containing protein 67.